Reading from the N-terminus, the 940-residue chain is Antiviral innate immune response receptor RIG-I (940 aa).

2 CARD domains span residues 1-87 (MTAE…GLCE) and 92-172 (WDFQ…KTLK). Residues lysine 48, lysine 96, lysine 154, lysine 164, lysine 172, and lysine 190 each participate in a glycyl lysine isopeptide (Lys-Gly) (interchain with G-Cter in ubiquitin) cross-link. Residues 219 to 928 (ENQNLSQNSC…LSFDAAEMAG (710 aa)) form an interaction with ZC3HAV1 region. One can recognise a Helicase ATP-binding domain in the interval 249 to 428 (ALPAQNGKNT…AEATEYICKL (180 aa)). 262–269 (APTGCGKT) lines the ATP pocket. Positions 370-373 (DECH) match the DECH box motif. The 167-residue stretch at 613–779 (KLRDLCFILQ…ILQTWDEAVF (167 aa)) folds into the Helicase C-terminal domain. The mediates interaction with RNF135 stretch occupies residues 738-928 (GSKCFLLTAN…LSFDAAEMAG (191 aa)). Residue threonine 773 is modified to Phosphothreonine; by CK2. One can recognise an RLR CTR domain in the interval 795 to 928 (DNQGKPEPVP…LSFDAAEMAG (134 aa)). Cysteine 813 is a binding site for Zn(2+). Lysine 815 participates in a covalent cross-link: Glycyl lysine isopeptide (Lys-Gly) (interchain with G-Cter in ubiquitin). A Zn(2+)-binding site is contributed by cysteine 816. N6-acetyllysine is present on lysine 861. Cysteine 867 and cysteine 872 together coordinate Zn(2+). Lysine 912 carries the post-translational modification N6-acetyllysine.

This sequence belongs to the helicase family. RLR subfamily. As to quaternary structure, monomer; maintained as a monomer in an autoinhibited state. Upon binding of viral RNAs and conformational shift, homooligomerizes and forms filaments on these molecules. Interacts (via tandem CARD domain) with MAVS/IPS1 promoting its filamentation. Interacts with DHX58/LGP2, IKBKE, TBK1 and STING1. Interacts (via CARD domain) with TRIM25 (via SPRY domain). Interacts (double-stranded RNA-bound oligomeric form) with RNF135 (homodimer); involved in RNA length-dependent activation of the RIG-I signaling pathway. Interacts with CYLD. Interacts with NLRC5; blocks the interaction of MAVS/IPS1 to RIGI. Interacts with SRC. Interacts with DDX60. Interacts with ZC3HAV1 (via zinc-fingers) in an RNA-dependent manner. Interacts (via tandem CARD domain) with SEC14L1; the interaction is direct and impairs the interaction of RIGI with MAVS/IPS1. Interacts with VCP/p97; interaction is direct and allows the recruitment of RNF125 and subsequent ubiquitination and degradation. Interacts with NOP53; may regulate RIGI through USP15-mediated 'Lys-63'-linked deubiquitination. Interacts with SIGLEC10, CBL and PTPN11; within a negative feedback loop leading to RIGI degradation. Interacts with LRRC25. Interacts with ZCCHC3; leading to activation of RIGI. Interacts with RNF123. Interacts with UBE2D3 and UBE2N; E2 ubiquitin ligases involved in RNF135-mediated ubiquitination of RIGI and activation of the RIG-I signaling pathway. Interacts with IFIT3. Interacts with DDX3X. Interacts with RTN3. Interacts with ARL16; this interaction is GTP-dependent and induced upon viral infection; this interaction suppresses the RNA sensing activity of RIGI. Interacts with DHX16; this interaction enhances RIGI-mediated antiviral response. Interacts with IRGM; promoting RIGI degradation. Interacts with IFI6; this interaction inhibits RIGI activation. Interacts with ECSIT; this interaction bridges RIGI to the MAVS complex at the mitochondrion. Interacts with YWHAE; this interaction drives RIGI at the mitochondrion. Post-translationally, phosphorylated in resting cells and dephosphorylated in RNA virus-infected cells. Phosphorylation at Thr-773 results in inhibition of its activity while dephosphorylation at these sites results in its activation. In terms of processing, ISGylated. Conjugated to ubiquitin-like protein ISG15 upon IFN-beta stimulation. ISGylation negatively regulates its function in antiviral signaling response. Sumoylated, probably by MUL1; inhibiting its polyubiquitination. Post-translationally, acetylated in response to RNA virus infection. Deacetylated by HDAC6 in the presence of viral mRNAs which is required for detection of viral RNA by RIGI. In terms of processing, ubiquitinated. 'Lys-63' ubiquitination by RNF135, which occurs after RNA-binding and homodimerization, releases the autoinhibition of the CARD domains by the RLR CTR domain, an essential step in the activation of the RIG-I signaling pathway. Also ubiquitinated by TRIM4. Also undergoes 'Lys-48' ubiquitination by RNF125 that leads to proteasomal degradation. 'Lys-48' ubiquitination follows viral infection and is enhanced by 'Lys-63'-linked ubiquitination of the CARD domains that promotes interaction with VCP/p97 and subsequent recruitment of RNF125. Within a negative feedback loop involving SIGLEC10 and PTPN11, 'Lys-48' ubiquitination at Lys-815 by CBL also elicits the proteasomal degradation of RIGI. Deubiquitinated by CYLD, a protease that selectively cleaves 'Lys-63'-linked ubiquitin chains. Also probably deubiquitinated by USP17L2/USP17 that cleaves 'Lys-48'- and 'Lys-63'-linked ubiquitin chains and positively regulates the receptor. Ubiquitinated by TRIM40 via 'Lys-48'-linked ubiquitination; leading to proteasomal degradation. Deubiquitinated by USP27X that cleaves 'Lys-63'-linked ubiquitin chains and inhibits the innate immune receptor activity. Deubiquitinated by USP3 that also cleaves 'Lys-63'-linked ubiquitin chains and inhibits the innate immune receptor activity. Degraded via selective autophagy following interaction with IRGM. IRGM promotes RIGI recruitment to autophagosome membranes, promoting its SQSTM1/p62-dependent autophagic degradation. In terms of tissue distribution, ubiquitously expressed, with highest levels in spleen, liver, intestine and heart. Up-regulated in tracheobronchial lymph node and tonsils during porcine reproductive and respiratory syndrome virus (PRRSV) infection.

It is found in the cytoplasm. It localises to the cell projection. Its subcellular location is the ruffle membrane. The protein resides in the cytoskeleton. The protein localises to the cell junction. It is found in the tight junction. The enzyme catalyses ATP + H2O = ADP + phosphate + H(+). Its function is as follows. Innate immune receptor that senses cytoplasmic viral nucleic acids and activates a downstream signaling cascade leading to the production of type I interferons and pro-inflammatory cytokines. Forms a ribonucleoprotein complex with viral RNAs on which it homooligomerizes to form filaments. The homooligomerization allows the recruitment of RNF135 an E3 ubiquitin-protein ligase that activates and amplifies the RIG-I-mediated antiviral signaling in an RNA length-dependent manner through ubiquitination-dependent and -independent mechanisms. Upon activation, associates with mitochondria antiviral signaling protein (MAVS/IPS1) that activates the IKK-related kinases TBK1 and IKBKE which in turn phosphorylate the interferon regulatory factors IRF3 and IRF7, activating transcription of antiviral immunological genes including the IFN-alpha and IFN-beta interferons. Ligands include: 5'-triphosphorylated ssRNA and dsRNA and short dsRNA (&lt;1 kb in length). In addition to the 5'-triphosphate moiety, blunt-end base pairing at the 5'-end of the RNA is very essential. Overhangs at the non-triphosphorylated end of the dsRNA RNA have no major impact on its activity. A 3'overhang at the 5'triphosphate end decreases and any 5'overhang at the 5' triphosphate end abolishes its activity. Detects both positive and negative strand RNA viruses including members of the families Paramyxoviridae, Rhabdoviridae: vesicular stomatitis virus (VSV) Orthomyxoviridae: influenza A and B virus, Flaviviridae: Japanese encephalitis virus (JEV). It also detects rotavirus and reovirus. Also involved in antiviral signaling in response to viruses containing a dsDNA genome. Detects dsRNA produced from non-self dsDNA by RNA polymerase III. May play important roles in granulocyte production and differentiation, bacterial phagocytosis and in the regulation of cell migration. This is Antiviral innate immune response receptor RIG-I from Sus scrofa (Pig).